We begin with the raw amino-acid sequence, 163 residues long: uncharacterized protein (163 aa).

Positions 1-10 (MGVPRAREGR) are enriched in basic and acidic residues. The segment at 1-163 (MGVPRAREGR…WSFTPLRWGS (163 aa)) is disordered.

This is an uncharacterized protein from Homo sapiens (Human).